The following is a 318-amino-acid chain: HPr kinase/phosphorylase (318 aa).

Active-site residues include histidine 143 and lysine 164. Residue 158–165 (GKSGVGKS) participates in ATP binding. A Mg(2+)-binding site is contributed by serine 165. Residue aspartate 182 is the Proton acceptor; for phosphorylation activity. Proton donor; for dephosphorylation activity of the active site. The important for the catalytic mechanism of both phosphorylation and dephosphorylation stretch occupies residues 206–215 (MEIRGLGILN). Glutamate 207 lines the Mg(2+) pocket. The active site involves arginine 248. The interval 269-274 (PVKPGR) is important for the catalytic mechanism of dephosphorylation.

It belongs to the HPrK/P family. As to quaternary structure, homohexamer. Requires Mg(2+) as cofactor.

The enzyme catalyses [HPr protein]-L-serine + ATP = [HPr protein]-O-phospho-L-serine + ADP + H(+). It carries out the reaction [HPr protein]-O-phospho-L-serine + phosphate + H(+) = [HPr protein]-L-serine + diphosphate. Functionally, catalyzes the ATP- as well as the pyrophosphate-dependent phosphorylation of a specific serine residue in HPr, a phosphocarrier protein of the phosphoenolpyruvate-dependent sugar phosphotransferase system (PTS). HprK/P also catalyzes the pyrophosphate-producing, inorganic phosphate-dependent dephosphorylation (phosphorolysis) of seryl-phosphorylated HPr (P-Ser-HPr). This is HPr kinase/phosphorylase from Leptospira borgpetersenii serovar Hardjo-bovis (strain L550).